The primary structure comprises 256 residues: 5'-nucleotidase SurE (256 aa).

A divalent metal cation is bound by residues Asp8, Asp9, Ser40, and Asn92.

It belongs to the SurE nucleotidase family. It depends on a divalent metal cation as a cofactor.

It localises to the cytoplasm. The enzyme catalyses a ribonucleoside 5'-phosphate + H2O = a ribonucleoside + phosphate. In terms of biological role, nucleotidase that shows phosphatase activity on nucleoside 5'-monophosphates. The chain is 5'-nucleotidase SurE from Sinorhizobium medicae (strain WSM419) (Ensifer medicae).